A 430-amino-acid polypeptide reads, in one-letter code: MAAIVIVGAQWGDEGKGKATDILGGRVDYVVKPNGGNNAGHTVVVGGEKYELKLLPAGILSENAVPVLGNGVVINLEALFEEIEGLEARGADASRLRISANAHLVAPYHQTLDRVQERFLGKRAIGTTGRGIGPAYADKVARVGVRVQDIFDESILRQKVESALDIKNQMLVKMYNRKAIDPETIVEYFLSYRDRLEPMVVDSEYELNTALDAGKHVLMEGGQATMLDVDHGTYPFVTSSNPTAGGASVGSGVGPTRITHSLGIIKAYTTRVGAGPFPTELFDKWGEYLQTTGGEVGVNTGRTRRCGWYDSVIARYASRVNGFTDYFLTKLDVLTGIGEIPICVAYDVDGERFDEMPLTQSQFHHAQPIYETMPAWEEDITGCTTFEELPQKAQDYVLRLEELSGTRMSYIGVGPGRDQTIVRHDVLDEK.

GTP-binding positions include 12–18 and 40–42; these read GDEGKGK and GHT. D13 (proton acceptor) is an active-site residue. The Mg(2+) site is built by D13 and G40. IMP contacts are provided by residues 13-16, 38-41, T128, R142, Q223, T238, and R302; these read DEGK and NAGH. Residue H41 is the Proton donor of the active site. A substrate-binding site is contributed by 298 to 304; the sequence is VNTGRTR. GTP is bound by residues R304, 330-332, and 412-414; these read KLD and GVG.

Belongs to the adenylosuccinate synthetase family. As to quaternary structure, homodimer. It depends on Mg(2+) as a cofactor.

It localises to the cytoplasm. The catalysed reaction is IMP + L-aspartate + GTP = N(6)-(1,2-dicarboxyethyl)-AMP + GDP + phosphate + 2 H(+). It participates in purine metabolism; AMP biosynthesis via de novo pathway; AMP from IMP: step 1/2. Its function is as follows. Plays an important role in the de novo pathway of purine nucleotide biosynthesis. Catalyzes the first committed step in the biosynthesis of AMP from IMP. The polypeptide is Adenylosuccinate synthetase (Corynebacterium ammoniagenes (Brevibacterium ammoniagenes)).